The following is a 498-amino-acid chain: Lysine--tRNA ligase (498 aa).

Mg(2+) contacts are provided by Glu-407 and Glu-414.

This sequence belongs to the class-II aminoacyl-tRNA synthetase family. As to quaternary structure, homodimer. Requires Mg(2+) as cofactor.

It localises to the cytoplasm. The enzyme catalyses tRNA(Lys) + L-lysine + ATP = L-lysyl-tRNA(Lys) + AMP + diphosphate. This is Lysine--tRNA ligase (lysS) from Rhizobium meliloti (strain 1021) (Ensifer meliloti).